A 226-amino-acid chain; its full sequence is Beta-casein (226 aa).

The tract at residues 1–51 (REKEELNVSSETVESLSSNEPDSSSEESITHINKEKSQKFKHEGQQQREVE) is disordered. Serine 9 carries the post-translational modification Phosphoserine. Threonine 12 bears the Phosphothreonine mark. Phosphoserine occurs at positions 15, 17, 18, and 25. The span at 28 to 51 (SITHINKEKSQKFKHEGQQQREVE) shows a compositional bias: basic and acidic residues.

The protein belongs to the beta-casein family. Post-translationally, there are at least three different forms found in milk, with varying degrees of phosphorylation. These include form 5-P which is phosphorylated at three sites, this form is present in low amounts, form 6-P which is phosphorylated at six sites, and form 7-P which is phosphorylated at seven sites. Mammary gland specific. Secreted in milk.

It is found in the secreted. Important role in determination of the surface properties of the casein micelles. The polypeptide is Beta-casein (Equus asinus (Donkey)).